The primary structure comprises 329 residues: DNA-directed RNA polymerase subunit alpha (329 aa).

An alpha N-terminal domain (alpha-NTD) region spans residues 1 to 235; the sequence is MQGSVTEFLK…EQLEAFVDLR (235 aa). Residues 249-329 form an alpha C-terminal domain (alpha-CTD) region; sequence FDPILLRPVD…NWPPASIADE (81 aa).

It belongs to the RNA polymerase alpha chain family. In terms of assembly, homodimer. The RNAP catalytic core consists of 2 alpha, 1 beta, 1 beta' and 1 omega subunit. When a sigma factor is associated with the core the holoenzyme is formed, which can initiate transcription.

The enzyme catalyses RNA(n) + a ribonucleoside 5'-triphosphate = RNA(n+1) + diphosphate. DNA-dependent RNA polymerase catalyzes the transcription of DNA into RNA using the four ribonucleoside triphosphates as substrates. This is DNA-directed RNA polymerase subunit alpha from Shigella flexneri serotype 5b (strain 8401).